The chain runs to 843 residues: MGAFTQHVLSEGWSFKDSGDQSPDAWLSVPTVPSVVHQDLQANGKLDDPFIGLNELSARWVNEKSWTYRNVFQKPTVPAGSSIFLVFDGLDTFAKVKLDGQVILESDNMFLAHRVDITKALDVEGEHTLEIDFDCALLRARELRKQHPDHKWVGFNGDTARLSVRKAQYHWGWDWGPVLMTAGIWKEVRLEVYSAKISDLWTEVHLAEDHSKARITAAAEVETQGTGNSYKATFTLSLQGQQIGKEVATLDGNVAKTTFDVQEPSLWWPNGYGDQTLYEISVSLEKEEEQAHQVSKKFGIRTAEVIQRPDKHGKSFFFRINGVDIFCGGACWIPADSLLTNITPDRYRKWIELMAVGHQVMIRVWGGGIYEDESFYQACDEVGVMVWQDFMFGCGNYPTWPEILESIEKEAEYNLRRLRHHPSIVIWVGNNEDYQVQEQQGLTYNYADKDPESWLKTDFPARYIYEHLLPKAVQKIIPSAYYHPGSPWGDGKITSDPTVGDMHQWNVWHGTQEKYQIFDTLGGRFNSEFGMEAFPHMSTIDHFVTNEADKYPQSHVLDFHNKADGHERRIATYLVENLRTATDLEVYIYLTQVVQAETMMFGYRGWRRQWGDERHCGGALLWQLNDCWPTISWAIVDYFLRPKPAFYAVSRVLKPLAIGVRREHHDWSVSHAQPPKTSKYELWVVSSLLKEVIGKVELRFISIKTGLAIHESIVRENVTIVPNGTTNILDGVIDHAVDEPHVLAARLWVDGELVARDVDWPQPFKYLDLSDRGLEITRISKTESEQVLELSARKPVKCLVFEERDNVRVSDSAIDIVPGDEQFVTIKGLKRSDAPLKYKFLGQ.

The active-site Proton donor is the Glu-432.

This sequence belongs to the glycosyl hydrolase 2 family. Beta-mannosidase B subfamily.

It catalyses the reaction Hydrolysis of terminal, non-reducing beta-D-mannose residues in beta-D-mannosides.. It functions in the pathway glycan metabolism; N-glycan degradation. Functionally, exoglycosidase that cleaves the single beta-linked mannose residue from the non-reducing end of beta-mannosidic oligosaccharides of various complexity and length. Prefers mannobiose over mannotriose and has no activity against polymeric mannan. Is also severely restricted by galactosyl substitutions at the +1 subsite. Releases the terminal mannose residue from mannobiose, mannotriose and galactosyl-mannotriose (GM3), but not from galactosyl-mannobiose (GM2) or di-galactosyl-mannopentaose (G2M5). The polypeptide is Beta-mannosidase B (mndB) (Emericella nidulans (strain FGSC A4 / ATCC 38163 / CBS 112.46 / NRRL 194 / M139) (Aspergillus nidulans)).